The following is a 379-amino-acid chain: ATP phosphoribosyltransferase regulatory subunit (379 aa).

It belongs to the class-II aminoacyl-tRNA synthetase family. HisZ subfamily. As to quaternary structure, heteromultimer composed of HisG and HisZ subunits.

Its subcellular location is the cytoplasm. It functions in the pathway amino-acid biosynthesis; L-histidine biosynthesis; L-histidine from 5-phospho-alpha-D-ribose 1-diphosphate: step 1/9. In terms of biological role, required for the first step of histidine biosynthesis. May allow the feedback regulation of ATP phosphoribosyltransferase activity by histidine. The polypeptide is ATP phosphoribosyltransferase regulatory subunit (Sinorhizobium fredii (strain NBRC 101917 / NGR234)).